Here is a 299-residue protein sequence, read N- to C-terminus: Release factor glutamine methyltransferase (299 aa).

Residues 134–138 (GTGSG), Asp157, Trp186, and Asn203 each bind S-adenosyl-L-methionine. Substrate is bound at residue 203-206 (NPPY).

This sequence belongs to the protein N5-glutamine methyltransferase family. PrmC subfamily.

It catalyses the reaction L-glutaminyl-[peptide chain release factor] + S-adenosyl-L-methionine = N(5)-methyl-L-glutaminyl-[peptide chain release factor] + S-adenosyl-L-homocysteine + H(+). Functionally, methylates the class 1 translation termination release factors RF1/PrfA and RF2/PrfB on the glutamine residue of the universally conserved GGQ motif. This chain is Release factor glutamine methyltransferase, found in Synechocystis sp. (strain ATCC 27184 / PCC 6803 / Kazusa).